A 391-amino-acid chain; its full sequence is Phosphoglycerate kinase (391 aa).

Residues 21 to 23 (DLN), Arg36, 59 to 62 (HRGR), Arg113, and Arg146 each bind substrate. ATP contacts are provided by residues Lys197, Glu314, and 340 to 343 (GGDT).

The protein belongs to the phosphoglycerate kinase family. Monomer.

The protein localises to the cytoplasm. It carries out the reaction (2R)-3-phosphoglycerate + ATP = (2R)-3-phospho-glyceroyl phosphate + ADP. It functions in the pathway carbohydrate degradation; glycolysis; pyruvate from D-glyceraldehyde 3-phosphate: step 2/5. This Ruthia magnifica subsp. Calyptogena magnifica protein is Phosphoglycerate kinase.